A 244-amino-acid chain; its full sequence is Lymphotoxin-beta (244 aa).

The Cytoplasmic portion of the chain corresponds to 1 to 18 (MGALGLEGRGGRLQGRGS). The chain crosses the membrane as a helical; Signal-anchor for type II membrane protein span at residues 19-48 (LLLAVAGATSLVTLLLAVPITVLAVLALVP). The Extracellular segment spans residues 49-244 (QDQGGLVTET…KTFFGAVMVG (196 aa)). Residues 88-243 (PAAHLIGAPL…GKTFFGAVMV (156 aa)) enclose the THD domain. N-linked (GlcNAc...) asparagine glycosylation is present at asparagine 222.

It belongs to the tumor necrosis factor family. In terms of assembly, heterotrimer of either two LTB and one LTA subunits or (less prevalent) two LTA and one LTB subunits.

The protein localises to the membrane. Its function is as follows. Cytokine that binds to LTBR/TNFRSF3. May play a specific role in immune response regulation. Provides the membrane anchor for the attachment of the heterotrimeric complex to the cell surface. In Pan troglodytes (Chimpanzee), this protein is Lymphotoxin-beta (LTB).